The chain runs to 351 residues: Lipopolysaccharide core biosynthesis mannosyltransferase LpsB (351 aa).

Belongs to the glycosyltransferase group 1 family. Glycosyltransferase 4 subfamily.

It participates in bacterial outer membrane biogenesis; LPS core biosynthesis. Acts at transfer of mannose group to a 3-deoxy-D-mono octulonic acid (KDO) via an alpha-1,5 linkage. The protein is Lipopolysaccharide core biosynthesis mannosyltransferase LpsB (lpsB) of Rhizobium meliloti (strain 1021) (Ensifer meliloti).